The chain runs to 272 residues: Tryptophan synthase alpha chain (272 aa).

Residues glutamate 49 and glutamate 60 each act as proton acceptor in the active site.

Belongs to the TrpA family. In terms of assembly, tetramer of two alpha and two beta chains.

The enzyme catalyses (1S,2R)-1-C-(indol-3-yl)glycerol 3-phosphate + L-serine = D-glyceraldehyde 3-phosphate + L-tryptophan + H2O. The protein operates within amino-acid biosynthesis; L-tryptophan biosynthesis; L-tryptophan from chorismate: step 5/5. In terms of biological role, the alpha subunit is responsible for the aldol cleavage of indoleglycerol phosphate to indole and glyceraldehyde 3-phosphate. The protein is Tryptophan synthase alpha chain of Legionella pneumophila subsp. pneumophila (strain Philadelphia 1 / ATCC 33152 / DSM 7513).